The chain runs to 420 residues: Phosphoribosylamine--glycine ligase (420 aa).

Residues 108-314 (KQIMVKYGIP…FAQNIDDILH (207 aa)) form the ATP-grasp domain. 134–195 (IEEQGAPIVV…EEFLAGEEFS (62 aa)) lines the ATP pocket. Mg(2+)-binding residues include Glu284 and Asn286.

Belongs to the GARS family. Mg(2+) serves as cofactor. The cofactor is Mn(2+).

It catalyses the reaction 5-phospho-beta-D-ribosylamine + glycine + ATP = N(1)-(5-phospho-beta-D-ribosyl)glycinamide + ADP + phosphate + H(+). It participates in purine metabolism; IMP biosynthesis via de novo pathway; N(1)-(5-phospho-D-ribosyl)glycinamide from 5-phospho-alpha-D-ribose 1-diphosphate: step 2/2. This is Phosphoribosylamine--glycine ligase from Streptococcus suis.